Reading from the N-terminus, the 358-residue chain is Feruloyl CoA ortho-hydroxylase F6H1-2 (358 aa).

Residues 200 to 308 (TKESLLMGSK…RISVPIFVNP (109 aa)) form the Fe2OG dioxygenase domain. Tyr-216 is a binding site for 2-oxoglutarate. Positions 231, 233, and 289 each coordinate Fe cation. Residues Arg-299 and Ser-301 each coordinate 2-oxoglutarate.

This sequence belongs to the iron/ascorbate-dependent oxidoreductase family. The cofactor is L-ascorbate. Fe(2+) serves as cofactor. Expressed at low levels in tubers, underground stems, leaves and petioles.

It carries out the reaction (E)-feruloyl-CoA + 2-oxoglutarate + O2 = (E)-6-hydroxyferuloyl-CoA + succinate + CO2. It participates in phenylpropanoid metabolism. Its function is as follows. 2-oxoglutarate (OG)- and Fe(II)-dependent dioxygenase (2OGD) involved in scopoletin biosynthesis. Converts feruloyl CoA into 6'-hydroxyferuloyl CoA, and, at low efficiency, caffeoyl-CoA into 6'-hydroxycaffeate, but has no activity with p-coumaroyl-CoA. In Ipomoea batatas (Sweet potato), this protein is Feruloyl CoA ortho-hydroxylase F6H1-2.